Here is a 349-residue protein sequence, read N- to C-terminus: Soluble TNF receptor II (349 aa).

The first 19 residues, 1–19, serve as a signal peptide directing secretion; the sequence is MKSVLYSYILFLSCIIING. TNFR-Cys repeat units lie at residues 31 to 65 and 67 to 108; these read KCKD…NTQC and PCGS…NRIC. Intrachain disulfides connect C32/C43, C44/C57, C47/C65, C68/C83, C86/C100, and C90/C108. N-linked (GlcNAc...) asparagine; by host glycans are attached at residues N101, N189, and N248.

The protein belongs to the orthopoxvirus OPG002 family.

Its function is as follows. Inhibits host immune defense by binding to host TNF and various chemokines in the extracellular space. Binds host CC chemokines (beta chemokines) and CXC chemokines (alpha chemokines). This chain is Soluble TNF receptor II (OPG002), found in Camelus.